Reading from the N-terminus, the 2474-residue chain is Serine/threonine-protein kinase TOR2 (2474 aa).

Positions 1–62 (MNKYINKYTT…NGPNDSGRVI (62 aa)) are disordered. Phosphothreonine is present on T10. A compositionally biased stretch (basic residues) spans 25-36 (HRTRKKLTHKSH). Residues 43–56 (STTSNTDSNHNGPN) show a composition bias toward polar residues. HEAT repeat units follow at residues 588–626 (YSLTEFVRLITISYIEHEDSSVRKLAALTSCDLFIKDDI), 636–674 (HSVSEVLSKLLMIAITDPVAEIRLEILQHLGSNFDPQLA), 676–710 (PDNLRLLFMALNDEIFGIQLEAIKIIGRLSSVNPA), 756–793 (PYIDPILDVILPKCQDASSAVASTALKVLGELSVVGGK), 797–835 (RYLKELMPLIINTFQDQSNSFKRDAALTTLGQLAASSGY), 841–879 (LDYPELLGILINILKTENNPHIRRGTVRLIGILGALDPY), 917–955 (YYPTVVIHNLMKILNDPSLSIHHTAAIQAIMHIFQNLGL), 1039–1076 (RFVPETLTFFLDILENDQSNKRIVPIRILKSLVTFGPN), 1079–1116 (DYSHLIMPIVVRMTEYSAGSLKKISIITLGRLAKNINL), 1118–1155 (EMSSRIVQALVRILNNGDRELTKATMNTLSLLLLQLGT), and 1292–1331 (SYQEDLIQALCKALSSSENPPEIYQMLLNLVEFMEHDDKP). An FAT domain is found at 1338–1922 (TLGKYAQKCH…VYPLMVAIKS (585 aa)). The PI3K/PI4K catalytic domain maps to 2097–2421 (FEPVFSVISS…EHKNAIRNAR (325 aa)). The interval 2103 to 2109 (VISSKQR) is G-loop. A catalytic loop region spans residues 2276–2284 (GLGDRHPSN). The tract at residues 2296–2321 (HIDFGDCFEAAILREKFPEKVPFRLT) is activation loop. One can recognise an FATC domain in the interval 2442–2474 (NDLDVPEQVDKLIQQATSVENLCQHYIGWCPFW).

This sequence belongs to the PI3/PI4-kinase family. In terms of assembly, the target of rapamycin complex 1 (TORC1) is composed of at least KOG1, LST8, TCO89 and either TOR1 (TORC1-A) or TOR2 (TORC1-B). TORC1 binds to and is inhibited by FKBP-rapamycin. Interacts with PIB2; following activation of PIB2 by glutamine. The target of rapamycin complex 2 (TORC2) is composed of at least AVO1, AVO2, BIT61, LST8, TOR2 and TSC11. TORC2 forms a homodimer. Contrary to TORC1, TORC2 does not bind to and is not sensitive to FKBP-rapamycin. Interacts with SLM1 and SLM2.

The protein resides in the cell membrane. It is found in the vacuole membrane. The enzyme catalyses L-seryl-[protein] + ATP = O-phospho-L-seryl-[protein] + ADP + H(+). The catalysed reaction is L-threonyl-[protein] + ATP = O-phospho-L-threonyl-[protein] + ADP + H(+). It catalyses the reaction a 1,2-diacyl-sn-glycero-3-phospho-(1D-myo-inositol) + ATP = a 1,2-diacyl-sn-glycero-3-phospho-(1D-myo-inositol 4-phosphate) + ADP + H(+). Its function is as follows. Phosphatidylinositol 3-kinase homolog, component of both TORC1 and TORC2. TORC1 regulates multiple cellular processes to control cell growth in response to environmental signals. Nutrient limitation and environmental stress signals cause inactivation of TORC1. Active TORC1 positively controls ribosome biogenesis via control of rRNA, ribosomal protein and tRNA gene expression, and rRNA processing. TORC1 positively controls protein biosynthesis by regulation of mRNA stability, translation initiation factor activity, and high-affinity amino acid permeases that serve to provide amino acids for use by the translation machinery. TORC1 also promotes growth by sequestering a number of nutrient and general stress-responsive transcription factors in the cytoplasm. TORC1 negatively controls macroautophagy, a process to recycle surplus cytoplasmic mass under nutrient starvation conditions. TORC1 controls many of these processes via TIP41-TAP42-mediated inhibition of the type 2A-related phosphatases PP2A and SIT4. In nutrient-rich conditions, responsible for the phosphorylation of AGC S6 kinase (S6K) YPK3, activating YPK3 kinase activity and promoting phosphorylation of ribosomal protein S6. Phosphorylates kinase SCH9 at 6 amino acids in the C-terminus, activating SCH9 kinase activity to properly regulate ribosome biogenesis, translation initiation, and entry into stationary phase. TORC2 regulates cell cycle-dependent polarization of the actin-cytoskeleton, cell wall integrity, and receptor endocytosis. TORC2 controls polarity of the actin cytoskeleton, which is required for orienting the secretory pathway toward discrete growth sites, via the RHO1/PKC1/MAPK cell integrity pathway by activating the RHO1 guanine nucleotide exchange factor ROM2. TORC2 phosphorylates the AGC kinase YPK2, an upstream effector of the cell integrity pathway. TORC2 negatively regulates calcineurin-dependent stress signaling via phosphorylation of its effector SLM1-SLM2. This Saccharomyces cerevisiae (strain ATCC 204508 / S288c) (Baker's yeast) protein is Serine/threonine-protein kinase TOR2 (TOR2).